The chain runs to 271 residues: Putative protein FAM220BP (271 aa).

This is Putative protein FAM220BP (FAM220BP) from Homo sapiens (Human).